The sequence spans 134 residues: uncharacterized protein (134 aa).

This sequence belongs to the orthopoxviruses B21 protein family.

This is an uncharacterized protein from Bos taurus (Bovine).